The sequence spans 441 residues: Glutamate-1-semialdehyde 2,1-aminomutase (441 aa).

Lys-270 is subject to N6-(pyridoxal phosphate)lysine.

Belongs to the class-III pyridoxal-phosphate-dependent aminotransferase family. HemL subfamily. In terms of assembly, homodimer. It depends on pyridoxal 5'-phosphate as a cofactor.

It localises to the cytoplasm. It catalyses the reaction (S)-4-amino-5-oxopentanoate = 5-aminolevulinate. It functions in the pathway porphyrin-containing compound metabolism; protoporphyrin-IX biosynthesis; 5-aminolevulinate from L-glutamyl-tRNA(Glu): step 2/2. The sequence is that of Glutamate-1-semialdehyde 2,1-aminomutase (hemL) from Propionibacterium freudenreichii subsp. freudenreichii.